Reading from the N-terminus, the 226-residue chain is Myosin regulatory light chain 10 (226 aa).

EF-hand domains are found at residues 84 to 119 (NSPA…LGRI), 154 to 189 (DPEE…QADR), and 190 to 225 (FSEE…GEEK). Ca(2+) contacts are provided by Asp97, Asn99, Asp101, and Asp108.

Myosin is a hexamer of 2 heavy chains and 4 light chains.

The chain is Myosin regulatory light chain 10 (MYL10) from Homo sapiens (Human).